The chain runs to 475 residues: Ribulose bisphosphate carboxylase large chain (475 aa).

Residues 1–2 (MS) constitute a propeptide that is removed on maturation. At P3 the chain carries N-acetylproline. Residue K14 is modified to N6,N6,N6-trimethyllysine. Substrate contacts are provided by N123 and T173. The Proton acceptor role is filled by K175. K177 contacts substrate. Positions 201, 203, and 204 each coordinate Mg(2+). K201 is subject to N6-carboxylysine. H294 serves as the catalytic Proton acceptor. Substrate contacts are provided by R295, H327, and S379.

Belongs to the RuBisCO large chain family. Type I subfamily. Heterohexadecamer of 8 large chains and 8 small chains; disulfide-linked. The disulfide link is formed within the large subunit homodimers. It depends on Mg(2+) as a cofactor. In terms of processing, the disulfide bond which can form in the large chain dimeric partners within the hexadecamer appears to be associated with oxidative stress and protein turnover.

The protein resides in the plastid. It is found in the chloroplast. It catalyses the reaction 2 (2R)-3-phosphoglycerate + 2 H(+) = D-ribulose 1,5-bisphosphate + CO2 + H2O. It carries out the reaction D-ribulose 1,5-bisphosphate + O2 = 2-phosphoglycolate + (2R)-3-phosphoglycerate + 2 H(+). RuBisCO catalyzes two reactions: the carboxylation of D-ribulose 1,5-bisphosphate, the primary event in carbon dioxide fixation, as well as the oxidative fragmentation of the pentose substrate in the photorespiration process. Both reactions occur simultaneously and in competition at the same active site. This chain is Ribulose bisphosphate carboxylase large chain, found in Amborella trichopoda.